The primary structure comprises 304 residues: UDP-3-O-acyl-N-acetylglucosamine deacetylase (304 aa).

Zn(2+) is bound by residues His-79, His-238, and Asp-242. His-265 acts as the Proton donor in catalysis.

This sequence belongs to the LpxC family. Zn(2+) is required as a cofactor.

The catalysed reaction is a UDP-3-O-[(3R)-3-hydroxyacyl]-N-acetyl-alpha-D-glucosamine + H2O = a UDP-3-O-[(3R)-3-hydroxyacyl]-alpha-D-glucosamine + acetate. The protein operates within glycolipid biosynthesis; lipid IV(A) biosynthesis; lipid IV(A) from (3R)-3-hydroxytetradecanoyl-[acyl-carrier-protein] and UDP-N-acetyl-alpha-D-glucosamine: step 2/6. In terms of biological role, catalyzes the hydrolysis of UDP-3-O-myristoyl-N-acetylglucosamine to form UDP-3-O-myristoylglucosamine and acetate, the committed step in lipid A biosynthesis. In Laribacter hongkongensis (strain HLHK9), this protein is UDP-3-O-acyl-N-acetylglucosamine deacetylase.